The following is a 432-amino-acid chain: Calcium uptake protein 2, mitochondrial (432 aa).

The N-terminal 22 residues, 1 to 22 (MAAAAGRSAWLAAWGGRLRRGL), are a transit peptide targeting the mitochondrion. One can recognise an EF-hand 1 domain in the interval 169–204 (KPHSGFHVAFKMLDVDGNEMIERKEFVKLQKIISKQ). Ca(2+)-binding residues include Asp182, Asp184, Asn186, Met188, Glu190, and Glu193. Phosphoserine is present on Ser202. The EF-hand 2; degenerate domain maps to 224 to 259 (EPGVNTTLQVRFFGKRGEKKLHYKEFRRFMENLQTE). In terms of domain architecture, EF-hand 3; degenerate spans 290-325 (TENKDIYWRNVREKLSVGESISLDEFKSFCHFTTHL). The 36-residue stretch at 359 to 394 (LSDNLLDTVFKIFDLDGDECLSHGEFLGVLKNRMHR) folds into the EF-hand 4 domain. Ca(2+) is bound by residues Asp372, Asp374, Asp376, Cys378, and Glu383.

The protein belongs to the MICU1 family. MICU2 subfamily. As to quaternary structure, heterodimer; disulfide-linked; heterodimerizes with MICU1. Component of the uniplex complex, composed of MCU, EMRE/SMDT1, MICU1 and MICU2 in a 4:4:1:1 stoichiometry. In terms of tissue distribution, predominantly expressed in stomach, intestine, skeletal muscle, kidney, heart, testis, prostate and uterus.

The protein localises to the mitochondrion intermembrane space. The protein resides in the mitochondrion inner membrane. Calcium sensor of the mitochondrial calcium uniporter (MCU) channel, which senses calcium level via its EF-hand domains. MICU1 and MICU2 form a disulfide-linked heterodimer that stimulates and inhibits MCU activity, depending on the concentration of calcium. At low calcium levels, MICU1 occludes the pore of the MCU channel, preventing mitochondrial calcium uptake. At higher calcium levels, calcium-binding to MICU1 and MICU2 induces a conformational change that weakens MCU-MICU1 interactions and moves the MICU1-MICU2 heterodimer away from the pore, allowing calcium permeation through the MCU channel. This chain is Calcium uptake protein 2, mitochondrial, found in Mus musculus (Mouse).